We begin with the raw amino-acid sequence, 261 residues long: uncharacterized protein (261 aa).

Residues 1–22 (MRDSKRVVLYISIMVLSIFIIG) form the signal peptide. A lipid anchor (N-palmitoyl cysteine) is attached at Cys23. Cys23 carries S-diacylglycerol cysteine lipidation.

The protein belongs to the staphylococcal tandem lipoprotein family.

It is found in the cell membrane. This is an uncharacterized protein from Staphylococcus aureus (strain N315).